The following is a 265-amino-acid chain: Hydroxyethylthiazole kinase (265 aa).

A substrate-binding site is contributed by methionine 36. ATP is bound by residues lysine 112 and serine 160. Residue glycine 187 participates in substrate binding.

This sequence belongs to the Thz kinase family. The cofactor is Mg(2+).

The enzyme catalyses 5-(2-hydroxyethyl)-4-methylthiazole + ATP = 4-methyl-5-(2-phosphooxyethyl)-thiazole + ADP + H(+). The protein operates within cofactor biosynthesis; thiamine diphosphate biosynthesis; 4-methyl-5-(2-phosphoethyl)-thiazole from 5-(2-hydroxyethyl)-4-methylthiazole: step 1/1. Functionally, catalyzes the phosphorylation of the hydroxyl group of 4-methyl-5-beta-hydroxyethylthiazole (THZ). The polypeptide is Hydroxyethylthiazole kinase (Clostridium perfringens (strain ATCC 13124 / DSM 756 / JCM 1290 / NCIMB 6125 / NCTC 8237 / Type A)).